Reading from the N-terminus, the 336-residue chain is Glyceraldehyde-3-phosphate dehydrogenase (336 aa).

NAD(+)-binding positions include 12–13, Asp-35, Arg-79, and Ser-121; that span reads RI. Residues 152–154 and Thr-183 contribute to the D-glyceraldehyde 3-phosphate site; that span reads SCT. Cys-153 functions as the Nucleophile in the catalytic mechanism. Position 184 (Asn-184) interacts with NAD(+). D-glyceraldehyde 3-phosphate-binding positions include Arg-198, 211–212, and Arg-234; that span reads TG. Asn-317 is an NAD(+) binding site.

This sequence belongs to the glyceraldehyde-3-phosphate dehydrogenase family. As to quaternary structure, homotetramer.

It localises to the cytoplasm. It carries out the reaction D-glyceraldehyde 3-phosphate + phosphate + NAD(+) = (2R)-3-phospho-glyceroyl phosphate + NADH + H(+). It participates in carbohydrate degradation; glycolysis; pyruvate from D-glyceraldehyde 3-phosphate: step 1/5. Resistant to pentalenolactone. Its function is as follows. Catalyzes the oxidative phosphorylation of glyceraldehyde 3-phosphate (G3P) to 1,3-bisphosphoglycerate (BPG) using the cofactor NAD. The first reaction step involves the formation of a hemiacetal intermediate between G3P and a cysteine residue, and this hemiacetal intermediate is then oxidized to a thioester, with concomitant reduction of NAD to NADH. The reduced NADH is then exchanged with the second NAD, and the thioester is attacked by a nucleophilic inorganic phosphate to produce BPG. The chain is Glyceraldehyde-3-phosphate dehydrogenase (gap) from Streptomyces coelicolor (strain ATCC BAA-471 / A3(2) / M145).